The primary structure comprises 1453 residues: Collagen alpha-1(I) chain (1453 aa).

Residues 1 to 22 (MFSFVDLRLLLLLGATALLTHG) form the signal peptide. Residues 23–151 (QEDIPEVSCI…PPGLGGNFAS (129 aa)) constitute a propeptide, N-terminal propeptide. In terms of domain architecture, VWFC spans 29-87 (VSCIHNGLRVPNGETWKPDVCLICICHNGTAVCDGVLCKEDLDCPNPQKREGECCPFCP). N-linked (GlcNAc...) asparagine glycosylation is present at Asn-56. The segment at 97–1206 (VIGVEGPKGD…KSQDGGRYYR (1110 aa)) is disordered. Composition is skewed to pro residues over residues 109–118 (PQGPRGPVGP) and 128–143 (PGLP…PGPP). The residue at position 152 (Gln-152) is a Pyrrolidone carboxylic acid. Residues 152–167 (QMSYGYDEKSAGVSVP) are nonhelical region (N-terminal). Lys-160 is subject to Allysine. A Phosphoserine modification is found at Ser-161. Residues 168-1181 (GPMGPSGPRG…PGPPGPPGPP (1014 aa)) are triple-helical region. Pro-179, Pro-182, Pro-185, Pro-194, Pro-197, Pro-200, Pro-215, Pro-230, Pro-236, Pro-245, and Pro-251 each carry 4-hydroxyproline. Low complexity predominate over residues 187 to 206 (PQGFQGPPGEPGEPGASGPM). A compositionally biased stretch (basic and acidic residues) spans 218–232 (NGDDGEAGKPGRPGE). 5-hydroxylysine; alternate is present on Lys-254. Lys-254 carries an O-linked (Gal...) hydroxylysine; alternate glycan. Ser-260 carries the post-translational modification Phosphoserine. A 4-hydroxyproline mark is found at Pro-278, Pro-281, Pro-287, Pro-296, and Pro-302. Over residues 307 to 320 (SAGARGNDGAVGAA) the composition is skewed to low complexity. The span at 322 to 334 (PPGPTGPTGPPGF) shows a compositional bias: pro residues. 4-hydroxyproline occurs at positions 323, 332, 335, 362, 365, 377, 383, 392, 398, 401, and 416. Residues 335–361 (PGAAGAKGEAGPQGARGSEGPQGVRGE) are compositionally biased toward low complexity. Residues 368–418 (AGAAGPAGNPGADGQPGAKGANGAPGIAGAPGFPGARGPSGPQGPSGAPGP) are compositionally biased toward low complexity. Lys-419 bears the 5-hydroxylysine mark. 4-hydroxyproline occurs at positions 425, 428, 440, 449, 464, 470, 479, and 485. The segment covering 474-483 (GERGGPGSRG) has biased composition (gly residues). 5-hydroxylysine is present on Lys-494. A 4-hydroxyproline mark is found at Pro-503, Pro-512, Pro-518, Pro-524, Pro-533, Pro-536, Pro-545, Pro-554, Pro-560, Pro-572, Pro-581, Pro-590, Pro-593, Pro-611, Pro-629, Pro-635, Pro-641, Pro-647, Pro-653, Pro-659, Pro-671, Pro-680, Pro-692, Pro-704, Pro-707, Pro-713, Pro-719, and Pro-728. Positions 527–566 (KGLTGSPGSPGPDGKTGPPGPAGQDGRPGPAGPPGARGQA) are enriched in low complexity. The segment covering 623 to 650 (QGPAGSPGFQGLPGPAGPPGEAGKPGEQ) has biased composition (low complexity). Composition is skewed to low complexity over residues 685–695 (PRGNNGAPGND) and 703–716 (APGA…PGLQ). The Cell attachment site motif lies at 734–736 (RGD). 5-hydroxylysine is present on Lys-740. Residues Pro-746, Pro-761, and Pro-767 each carry the 4-hydroxyproline modification. The span at 773–787 (TGPSGPAGPTGARGA) shows a compositional bias: low complexity. Position 776 is a phosphoserine (Ser-776). Pro-788, Pro-794, Pro-797, Pro-806, Pro-812, Pro-830, Pro-839, and Pro-848 each carry 4-hydroxyproline. A compositionally biased stretch (low complexity) spans 800–815 (AGFAGPPGADGQPGAK). Over residues 829–841 (PPGPAGPAGPPGP) the composition is skewed to pro residues. A compositionally biased stretch (low complexity) spans 842–872 (IGNVGAPGPKGSRGAAGPPGATGFPGAAGRV). At Lys-851 the chain carries 5-hydroxylysine. Pro-860 and Pro-866 each carry 4-hydroxyproline. Pro-874 is modified (3-hydroxyproline). 16 positions are modified to 4-hydroxyproline: Pro-875, Pro-884, Pro-887, Pro-908, Pro-917, Pro-926, Pro-935, Pro-953, Pro-962, Pro-965, Pro-971, Pro-986, Pro-992, Pro-998, Pro-1007, and Pro-1013. The segment covering 901 to 910 (ETGPAGRPGE) has biased composition (low complexity). The segment covering 920-935 (AGEKGSPGADGPAGSP) has biased composition (low complexity). Over residues 985-995 (PPGPMGPPGLA) the composition is skewed to pro residues. Residues 997–1012 (PPGESGREGSPGAEGS) are compositionally biased toward low complexity. Position 1022 is a 5-hydroxylysine (Lys-1022). A compositionally biased stretch (pro residues) spans 1031–1046 (AGPPGAPGAPGAPGPV). Residues Pro-1034, Pro-1037, and Pro-1040 each carry the 4-hydroxyproline modification. The segment covering 1067-1081 (IGPAGARGPAGPQGP) has biased composition (low complexity). The short motif at 1082-1084 (RGD) is the Cell attachment site element. Residues 1082–1096 (RGDKGETGEQGDRGI) show a composition bias toward basic and acidic residues. Lys-1085 bears the 5-hydroxylysine mark. 5-hydroxylysine; alternate is present on Lys-1097. An O-linked (Gal...) hydroxylysine; alternate glycan is attached at Lys-1097. A compositionally biased stretch (low complexity) spans 1102 to 1148 (FSGLQGPPGSPGSPGEQGPSGASGPAGPRGPPGSAGSPGKDGLNGLP). Pro-1109, Pro-1112, Pro-1115, Pro-1133, and Pro-1148 each carry 4-hydroxyproline. Pro-1153 bears the 3-hydroxyproline mark. Pro-1154 is modified (4-hydroxyproline). Positions 1166–1181 (AGPPGPPGPPGPPGPP) are enriched in pro residues. A 3-hydroxyproline modification is found at Pro-1168. Pro-1169 carries the 4-hydroxyproline modification. At Pro-1171 the chain carries 3-hydroxyproline. Pro-1172 is modified (4-hydroxyproline). Position 1174 is a 3-hydroxyproline (Pro-1174). Residues Pro-1175, Pro-1178, and Pro-1181 each carry the 4-hydroxyproline modification. Residues 1176–1186 (GPPGPPSGGYD) are major antigenic determinant (of neutral salt-extracted rat skin collagen). The nonhelical region (C-terminal) stretch occupies residues 1182–1207 (SGGYDFSFLPQPPQEKSQDGGRYYRA). Lys-1197 is subject to Allysine. A compositionally biased stretch (basic and acidic residues) spans 1197-1206 (KSQDGGRYYR). Residues 1208-1453 (DDANVVRDRD…GMDIGPACFV (246 aa)) constitute a propeptide, C-terminal propeptide. The 236-residue stretch at 1218 to 1453 (LEVDTTLKSL…GMDIGPACFV (236 aa)) folds into the Fibrillar collagen NC1 domain. Intrachain disulfides connect Cys-1248–Cys-1280, Cys-1288–Cys-1451, and Cys-1359–Cys-1404. The Ca(2+) site is built by Asp-1266, Asn-1268, Gln-1269, Cys-1271, and Asp-1274. Residue Asn-1354 is glycosylated (N-linked (GlcNAc...) asparagine).

It belongs to the fibrillar collagen family. In terms of assembly, trimers of one alpha 2(I) and two alpha 1(I) chains. Interacts with MRC2. Interacts with TRAM2. Interacts with MFAP4 in a Ca (2+)-dependent manner. Contains mostly 4-hydroxyproline. Proline residues at the third position of the tripeptide repeating unit (G-X-Y) are hydroxylated in some or all of the chains. Post-translationally, contains 3-hydroxyproline at a few sites. This modification occurs on the first proline residue in the sequence motif Gly-Pro-Hyp, where Hyp is 4-hydroxyproline. In terms of processing, lysine residues at the third position of the tripeptide repeating unit (G-X-Y) are 5-hydroxylated in some or all of the chains. O-glycosylated on hydroxylated lysine residues. The O-linked glycan consists of a Glc-Gal disaccharide. In terms of tissue distribution, forms the fibrils of tendon, ligaments and bones. In bones the fibrils are mineralized with calcium hydroxyapatite.

It localises to the secreted. The protein resides in the extracellular space. Its subcellular location is the extracellular matrix. In terms of biological role, type I collagen is a member of group I collagen (fibrillar forming collagen). This is Collagen alpha-1(I) chain (Col1a1) from Rattus norvegicus (Rat).